A 312-amino-acid polypeptide reads, in one-letter code: Polyhedral envelope protein (312 aa).

This sequence belongs to the baculoviridae PE family.

The protein localises to the virion membrane. In terms of biological role, major component of the polyhedra envelope. In Lymantria dispar multicapsid nuclear polyhedrosis virus (LdMNPV), this protein is Polyhedral envelope protein.